A 205-amino-acid polypeptide reads, in one-letter code: ATP synthase subunit b 1 (205 aa).

Over residues 1 to 15 the composition is skewed to polar residues; the sequence is MFVSTAFAQTATESQ. The segment at 1–26 is disordered; that stretch reads MFVSTAFAQTATESQPAPAAGEHGAA. Low complexity predominate over residues 16-26; that stretch reads PAPAAGEHGAA. A helical membrane pass occupies residues 56–78; it reads SQILWLAITFGLFYLFMSRVVLP.

This sequence belongs to the ATPase B chain family. F-type ATPases have 2 components, F(1) - the catalytic core - and F(0) - the membrane proton channel. F(1) has five subunits: alpha(3), beta(3), gamma(1), delta(1), epsilon(1). F(0) has three main subunits: a(1), b(2) and c(10-14). The alpha and beta chains form an alternating ring which encloses part of the gamma chain. F(1) is attached to F(0) by a central stalk formed by the gamma and epsilon chains, while a peripheral stalk is formed by the delta and b chains.

The protein localises to the cell inner membrane. Functionally, f(1)F(0) ATP synthase produces ATP from ADP in the presence of a proton or sodium gradient. F-type ATPases consist of two structural domains, F(1) containing the extramembraneous catalytic core and F(0) containing the membrane proton channel, linked together by a central stalk and a peripheral stalk. During catalysis, ATP synthesis in the catalytic domain of F(1) is coupled via a rotary mechanism of the central stalk subunits to proton translocation. In terms of biological role, component of the F(0) channel, it forms part of the peripheral stalk, linking F(1) to F(0). The chain is ATP synthase subunit b 1 from Brucella anthropi (strain ATCC 49188 / DSM 6882 / CCUG 24695 / JCM 21032 / LMG 3331 / NBRC 15819 / NCTC 12168 / Alc 37) (Ochrobactrum anthropi).